The sequence spans 718 residues: Polyribonucleotide nucleotidyltransferase (718 aa).

The Mg(2+) site is built by Asp-493 and Asp-499. The 60-residue stretch at 560–619 folds into the KH domain; sequence PRVIKKQIDPDKIRNVIGPGGKMINKIIDETGVKIDIEPDGLIYISSSDAEQAEQAIKAI. An S1 motif domain is found at 629 to 697; sequence GEVYLGKVVR…ERGRINLSRK (69 aa). The disordered stretch occupies residues 695-718; sequence SRKQALGEEDGKTNNDDKKSTKKT. The segment covering 699 to 718 has biased composition (basic and acidic residues); that stretch reads ALGEEDGKTNNDDKKSTKKT.

Belongs to the polyribonucleotide nucleotidyltransferase family. Mg(2+) is required as a cofactor.

The protein resides in the cytoplasm. The catalysed reaction is RNA(n+1) + phosphate = RNA(n) + a ribonucleoside 5'-diphosphate. Involved in mRNA degradation. Catalyzes the phosphorolysis of single-stranded polyribonucleotides processively in the 3'- to 5'-direction. This is Polyribonucleotide nucleotidyltransferase from Natranaerobius thermophilus (strain ATCC BAA-1301 / DSM 18059 / JW/NM-WN-LF).